A 200-amino-acid chain; its full sequence is dITP/XTP pyrophosphatase (200 aa).

Residue 7 to 12 (SNNYHK) participates in substrate binding. Catalysis depends on Asp-68, which acts as the Proton acceptor. Position 68 (Asp-68) interacts with Mg(2+). Residues Ser-69, 147 to 150 (FGYD), Lys-170, and 175 to 176 (HR) each bind substrate.

Belongs to the HAM1 NTPase family. Homodimer. Mg(2+) serves as cofactor.

It catalyses the reaction XTP + H2O = XMP + diphosphate + H(+). The catalysed reaction is dITP + H2O = dIMP + diphosphate + H(+). It carries out the reaction ITP + H2O = IMP + diphosphate + H(+). Functionally, pyrophosphatase that catalyzes the hydrolysis of nucleoside triphosphates to their monophosphate derivatives, with a high preference for the non-canonical purine nucleotides XTP (xanthosine triphosphate), dITP (deoxyinosine triphosphate) and ITP. Seems to function as a house-cleaning enzyme that removes non-canonical purine nucleotides from the nucleotide pool, thus preventing their incorporation into DNA/RNA and avoiding chromosomal lesions. The sequence is that of dITP/XTP pyrophosphatase from Acholeplasma laidlawii (strain PG-8A).